The chain runs to 100 residues: Urease subunit gamma (100 aa).

Belongs to the urease gamma subunit family. In terms of assembly, heterotrimer of UreA (gamma), UreB (beta) and UreC (alpha) subunits. Three heterotrimers associate to form the active enzyme.

The protein localises to the cytoplasm. The enzyme catalyses urea + 2 H2O + H(+) = hydrogencarbonate + 2 NH4(+). The protein operates within nitrogen metabolism; urea degradation; CO(2) and NH(3) from urea (urease route): step 1/1. The polypeptide is Urease subunit gamma (Cereibacter sphaeroides (strain ATCC 17029 / ATH 2.4.9) (Rhodobacter sphaeroides)).